Consider the following 62-residue polypeptide: Large ribosomal subunit protein bL35 (62 aa).

Positions 25-62 are disordered; sequence EQAYRSHLSQNKTTKQKRQARKSVQMHSSDVKRFKALI. The segment covering 53–62 has biased composition (basic and acidic residues); it reads SDVKRFKALI.

This sequence belongs to the bacterial ribosomal protein bL35 family.

The protein is Large ribosomal subunit protein bL35 of Mycoplasmopsis fermentans (Mycoplasma fermentans).